Consider the following 164-residue polypeptide: Phosphopantetheine adenylyltransferase (164 aa).

Ser-11 contacts substrate. Residues 11 to 12 (SF) and His-19 contribute to the ATP site. Positions 43, 76, and 90 each coordinate substrate. ATP contacts are provided by residues 91-93 (GLR), Glu-101, and 126-132 (YQHISSS).

It belongs to the bacterial CoaD family. In terms of assembly, homohexamer. Mg(2+) serves as cofactor.

It localises to the cytoplasm. The enzyme catalyses (R)-4'-phosphopantetheine + ATP + H(+) = 3'-dephospho-CoA + diphosphate. It functions in the pathway cofactor biosynthesis; coenzyme A biosynthesis; CoA from (R)-pantothenate: step 4/5. In terms of biological role, reversibly transfers an adenylyl group from ATP to 4'-phosphopantetheine, yielding dephospho-CoA (dPCoA) and pyrophosphate. This chain is Phosphopantetheine adenylyltransferase, found in Streptococcus gordonii (strain Challis / ATCC 35105 / BCRC 15272 / CH1 / DL1 / V288).